Here is a 146-residue protein sequence, read N- to C-terminus: ATP synthase epsilon chain (146 aa).

Positions 103-124 (QAERELGQLPEEEDEDSRRARE) are disordered.

The protein belongs to the ATPase epsilon chain family. As to quaternary structure, F-type ATPases have 2 components, CF(1) - the catalytic core - and CF(0) - the membrane proton channel. CF(1) has five subunits: alpha(3), beta(3), gamma(1), delta(1), epsilon(1). CF(0) has three main subunits: a, b and c.

It localises to the cell membrane. Its function is as follows. Produces ATP from ADP in the presence of a proton gradient across the membrane. This Rubrobacter xylanophilus (strain DSM 9941 / JCM 11954 / NBRC 16129 / PRD-1) protein is ATP synthase epsilon chain.